The following is a 318-amino-acid chain: Protoheme IX farnesyltransferase (318 aa).

A run of 9 helical transmembrane segments spans residues 34–54, 55–75, 95–115, 118–138, 155–175, 182–202, 228–250, 254–273, and 287–307; these read VMSLVVFTAFAGLVLAPGQIN, PVIGFIAILCIAIGAGASGAL, IPAGKILPQEALAFGLTLSAF, IILGLAVNWLAAGLLAFTIFF, IVIGGAAGAFPPMIGWACVTG, IVLFLIIFLWTPAHFWALALF, IVVYALLTALSGICPTLLGFASL, AFATALGLGFIWYSLAVLRM, and FAFSIAYLFAIFSALLVDYMI.

Belongs to the UbiA prenyltransferase family. Protoheme IX farnesyltransferase subfamily.

The protein localises to the cell inner membrane. It catalyses the reaction heme b + (2E,6E)-farnesyl diphosphate + H2O = Fe(II)-heme o + diphosphate. It participates in porphyrin-containing compound metabolism; heme O biosynthesis; heme O from protoheme: step 1/1. Functionally, converts heme B (protoheme IX) to heme O by substitution of the vinyl group on carbon 2 of heme B porphyrin ring with a hydroxyethyl farnesyl side group. The sequence is that of Protoheme IX farnesyltransferase from Sinorhizobium fredii (strain NBRC 101917 / NGR234).